A 576-amino-acid chain; its full sequence is TRAF-type zinc finger domain-containing protein 1 (576 aa).

A2 is modified (N-acetylalanine). A TRAF-type zinc finger spans residues 27 to 103 (IHEIHCQRNI…DLELSVVKLK (77 aa)). Phosphoserine is present on residues S278, S320, S326, S327, S409, S415, S430, and S450. A disordered region spans residues 402-432 (EGIPTQDSQPEDRSPELSRRRVKHQGDLSSG). Over residues 411–420 (PEDRSPELSR) the composition is skewed to basic and acidic residues. Disordered regions lie at residues 465-491 (LNSS…GSQD) and 529-576 (HGSP…EEEE). Residue S531 is modified to Phosphoserine. Residues 540 to 552 (GSRSSRVTPTAAS) show a composition bias toward polar residues.

Interacts with MAVS, TICAM1, TRAF1, TRAF2, TRAF3 and TRAF6. In terms of tissue distribution, expressed in vascular smooth muscle cells.

Functionally, negative feedback regulator that controls excessive innate immune responses. Regulates both Toll-like receptor 4 (TLR4) and DDX58/RIG1-like helicases (RLH) pathways. May inhibit the LTR pathway by direct interaction with TRAF6 and attenuation of NF-kappa-B activation. May negatively regulate the RLH pathway downstream from MAVS and upstream of NF-kappa-B and IRF3. This Rattus norvegicus (Rat) protein is TRAF-type zinc finger domain-containing protein 1 (Trafd1).